We begin with the raw amino-acid sequence, 155 residues long: SsrA-binding protein (155 aa).

This sequence belongs to the SmpB family.

Its subcellular location is the cytoplasm. Its function is as follows. Required for rescue of stalled ribosomes mediated by trans-translation. Binds to transfer-messenger RNA (tmRNA), required for stable association of tmRNA with ribosomes. tmRNA and SmpB together mimic tRNA shape, replacing the anticodon stem-loop with SmpB. tmRNA is encoded by the ssrA gene; the 2 termini fold to resemble tRNA(Ala) and it encodes a 'tag peptide', a short internal open reading frame. During trans-translation Ala-aminoacylated tmRNA acts like a tRNA, entering the A-site of stalled ribosomes, displacing the stalled mRNA. The ribosome then switches to translate the ORF on the tmRNA; the nascent peptide is terminated with the 'tag peptide' encoded by the tmRNA and targeted for degradation. The ribosome is freed to recommence translation, which seems to be the essential function of trans-translation. This chain is SsrA-binding protein, found in Helicobacter hepaticus (strain ATCC 51449 / 3B1).